The following is a 333-amino-acid chain: uncharacterized protein (333 aa).

Belongs to the polysaccharide synthase family.

This is an uncharacterized protein from Methanocaldococcus jannaschii (strain ATCC 43067 / DSM 2661 / JAL-1 / JCM 10045 / NBRC 100440) (Methanococcus jannaschii).